A 509-amino-acid polypeptide reads, in one-letter code: Cytochrome P450 monooxygenase AFT11-1 (509 aa).

Residue C432 participates in heme binding.

This sequence belongs to the cytochrome P450 family. Heme serves as cofactor.

Its pathway is mycotoxin biosynthesis. In terms of biological role, cytochrome P450 monooxygenase; part of the gene clusters that mediate the biosynthesis of the host-selective toxins (HSTs) AF-toxins responsible for Alternaria black spot of strawberry disease by the strawberry pathotype. AF-toxin I and III are valine derivatives of 2,3-dyhydroxy-isovaleric acid and 2-hydroxy-isovaleric acid respectively, while AF II is an isoleucine derivative of 2-hydroxy-valeric acid. These derivatives are bound to a 9,10-epoxy-8-hydroxy-9-methyl-decatrienoic acid (EDA) moiety. On cellular level, AF-toxins affect plasma membrane of susceptible cells and cause a sudden increase in loss of K(+) after a few minutes of toxin treatment. The aldo-keto reductase AFTS1 catalyzes the conversion of 2-keto-isovaleric acid (2-KIV) to 2-hydroxy-isovaleric acid (2-HIV) by reduction of its ketone to an alcohol. The acyl-CoA ligase AFT1, the hydrolase AFT2 and the enoyl-CoA hydratases AFT3 and AFT6, but also the polyketide synthase AFT9, the acyl-CoA dehydrogenase AFT10, the cytochrome P450 monooxygenase AFT11 and the oxidoreductase AFT12 are all involved in the biosynthesis of the AK-, AF- and ACT-toxin common EDA structural moiety. The exact function of each enzyme, and of additional enzymes identified within the AF-toxin clusters have still to be determined. This is Cytochrome P450 monooxygenase AFT11-1 from Alternaria alternata (Alternaria rot fungus).